We begin with the raw amino-acid sequence, 599 residues long: DNA primase (599 aa).

The segment at 38–62 (CPFHDEKTPSFTVSEDKQICHCFGC) adopts a CHC2-type zinc-finger fold. One can recognise a Toprim domain in the interval 260-341 (DEIVLLEGFM…NVFVIQLPSG (82 aa)). E266, D310, and D312 together coordinate Mg(2+).

Belongs to the DnaG primase family. As to quaternary structure, monomer. Interacts with DnaB. Zn(2+) is required as a cofactor. Requires Mg(2+) as cofactor.

The enzyme catalyses ssDNA + n NTP = ssDNA/pppN(pN)n-1 hybrid + (n-1) diphosphate.. In terms of biological role, RNA polymerase that catalyzes the synthesis of short RNA molecules used as primers for DNA polymerase during DNA replication. The polypeptide is DNA primase (Staphylococcus aureus (strain COL)).